Consider the following 122-residue polypeptide: Basic phospholipase A2 homolog (122 aa).

7 cysteine pairs are disulfide-bonded: Cys-26/Cys-115, Cys-28/Cys-44, Cys-43/Cys-95, Cys-49/Cys-122, Cys-50/Cys-88, Cys-57/Cys-81, and Cys-75/Cys-86. The important for membrane-damaging activities in eukaryotes and bacteria; heparin-binding stretch occupies residues 105–117 (KRYMTYPNILCSS).

This sequence belongs to the phospholipase A2 family. Group II subfamily. N49 sub-subfamily. Expressed by the venom gland.

It localises to the secreted. The sequence is that of Basic phospholipase A2 homolog from Gloydius halys (Chinese water mocassin).